Here is a 393-residue protein sequence, read N- to C-terminus: Glutamate 5-kinase 1 (393 aa).

K17 is a binding site for ATP. Positions 57, 144, and 156 each coordinate substrate. Residue 176–177 (SD) coordinates ATP. The PUA domain occupies 282–359 (AGSLSIDAGA…AEIAAILGYA (78 aa)).

This sequence belongs to the glutamate 5-kinase family.

The protein localises to the cytoplasm. The enzyme catalyses L-glutamate + ATP = L-glutamyl 5-phosphate + ADP. It participates in amino-acid biosynthesis; L-proline biosynthesis; L-glutamate 5-semialdehyde from L-glutamate: step 1/2. Catalyzes the transfer of a phosphate group to glutamate to form L-glutamate 5-phosphate. The polypeptide is Glutamate 5-kinase 1 (Rhizobium meliloti (strain 1021) (Ensifer meliloti)).